The following is a 229-amino-acid chain: Uracil-DNA glycosylase (229 aa).

The Proton acceptor role is filled by Asp64.

Belongs to the uracil-DNA glycosylase (UDG) superfamily. UNG family.

It is found in the cytoplasm. It carries out the reaction Hydrolyzes single-stranded DNA or mismatched double-stranded DNA and polynucleotides, releasing free uracil.. Excises uracil residues from the DNA which can arise as a result of misincorporation of dUMP residues by DNA polymerase or due to deamination of cytosine. This Geobacillus kaustophilus (strain HTA426) protein is Uracil-DNA glycosylase.